A 238-amino-acid chain; its full sequence is Sugar fermentation stimulation protein homolog (238 aa).

It belongs to the SfsA family.

The polypeptide is Sugar fermentation stimulation protein homolog (Actinobacillus succinogenes (strain ATCC 55618 / DSM 22257 / CCUG 43843 / 130Z)).